The following is a 66-amino-acid chain: Beta-toxin Chui3 (66 aa).

The 66-residue stretch at 1-66 (KEGYLVELGT…VWPLKNKTCR (66 aa)) folds into the LCN-type CS-alpha/beta domain. 4 disulfide bridges follow: C12-C65, C16-C41, C25-C46, and C29-C48.

The protein belongs to the long (4 C-C) scorpion toxin superfamily. Sodium channel inhibitor family. Beta subfamily. Expressed by the venom gland.

Its subcellular location is the secreted. Beta toxins bind voltage-independently at site-4 of sodium channels (Nav) and shift the voltage of activation toward more negative potentials thereby affecting sodium channel activation and promoting spontaneous and repetitive firing. Acts on human sodium channel Nav1.6/SCN8A. The sequence is that of Beta-toxin Chui3 from Centruroides huichol (Scorpion).